The primary structure comprises 547 residues: MTSNAHATDAAFKALAIAWTTREGRILDLFAQPDRFERFSVAYGDLLIDFSKTAITDDILSQLLELARAGGVEAQRDAMFAGDHINLTEDRAVLHTALRDQASDTIQVDGIDVKPGVVETLARLGDFATGVREGRIAGARGGVITDVVNIGIGGSDLGPAMVTLALAPYHDGPRCHFVSNVDSAHITDVLKGLDPATTLFIVASKTFTTVETMTNAATARAFIVNALGEDAVGAHFAAVSTALDKVGAFGIPADRIFGFWDWVGGRYSVWSAIGLPLMLAIGPDRFREFLAGAAAMDEHFRSAVLDQNLPVLLGLIGLWHRNACGFPSRAIIPYDQRLARLPAYLQQLDMESNGKSVTRDGAAVSRPTGPIVWGEPGTNAQHAFFQLLHQGTDIVPVEFLVGAQSHEPALKDHQDLLVANCLAQSEALMRGRTLEEATAQLRAKGISEDKVAEIAPHRVFPGDRPSLTIAYATLDPFTLGRIIALYEHRVFVEAAVWGINGFDQWGVELGKELATQFLPAVTGGALPPSASASTSGLIAHLDAVAGG.

Glu351 acts as the Proton donor in catalysis. Active-site residues include His382 and Lys511.

The protein belongs to the GPI family.

It is found in the cytoplasm. It carries out the reaction alpha-D-glucose 6-phosphate = beta-D-fructose 6-phosphate. The protein operates within carbohydrate biosynthesis; gluconeogenesis. It functions in the pathway carbohydrate degradation; glycolysis; D-glyceraldehyde 3-phosphate and glycerone phosphate from D-glucose: step 2/4. Its function is as follows. Catalyzes the reversible isomerization of glucose-6-phosphate to fructose-6-phosphate. The protein is Glucose-6-phosphate isomerase of Xanthobacter autotrophicus (strain ATCC BAA-1158 / Py2).